We begin with the raw amino-acid sequence, 235 residues long: PRA1 family protein 1 (235 aa).

Positions 1-17 (MESNSNSNETMYGNPNI) are enriched in polar residues. The tract at residues 1–55 (MESNSNSNETMYGNPNINMGFVDSGNSNIGNNTGSMSPPPQQQQQPQQASSTPAG) is disordered. Over residues 24 to 48 (SGNSNIGNNTGSMSPPPQQQQQPQQ) the composition is skewed to low complexity. Transmembrane regions (helical) follow at residues 144–164 (SVFF…LLFI) and 187–207 (AFLS…LVGA).

The protein belongs to the PRA1 family.

It localises to the membrane. May act as a general Rab protein regulator. This Dictyostelium discoideum (Social amoeba) protein is PRA1 family protein 1 (prafA).